Consider the following 1308-residue polypeptide: Cilia- and flagella-associated protein 57 C (1308 aa).

7 WD repeats span residues 57 to 99 (NEYR…RRKN), 110 to 154 (YNIK…KCLG), 415 to 454 (NHTG…IKIS), 504 to 546 (SPFK…NPSQ), 551 to 590 (GHTG…QHQQ), 645 to 689 (LLDI…GKFT), and 694 to 733 (HDER…ARGM). A coiled-coil region spans residues 779–1000 (LNSRDDRIRQ…RDKIDGQKKI (222 aa)).

The protein belongs to the CFAP57 family. As to quaternary structure, forms a heterodimer with CFAP57A. Associates with components of the nexin-dynein regulatory complex (N-DRC) and the CFAP184:CFAP263 complex.

It is found in the cell projection. It localises to the cilium. In terms of biological role, associates with components of the nexin-dynein regulatory complex (N-DRC), a key regulator of ciliary/flagellar motility, and might act as an inner dynein arm (IDA) hub or linkage. The sequence is that of Cilia- and flagella-associated protein 57 C (CFAP57C) from Tetrahymena thermophila (strain SB210).